A 103-amino-acid chain; its full sequence is Large ribosomal subunit protein bL21 (103 aa).

It belongs to the bacterial ribosomal protein bL21 family. As to quaternary structure, part of the 50S ribosomal subunit. Contacts protein L20.

Its function is as follows. This protein binds to 23S rRNA in the presence of protein L20. The sequence is that of Large ribosomal subunit protein bL21 from Bordetella petrii (strain ATCC BAA-461 / DSM 12804 / CCUG 43448).